We begin with the raw amino-acid sequence, 714 residues long: Polynucleotide 5'-hydroxyl-kinase NOL9 (714 aa).

Alanine 2 is modified (N-acetylalanine). The short motif at 31–47 (RRGRRRFGVLTRVELRR) is the Nucleolar localization signal element. Residues 80 to 133 (ARSRPAPRSPPTPSVPPAPCTASATCSLLNPRNHSTPQSRAGRPVRKVSPNVTQ) are disordered. Residues 86–98 (PRSPPTPSVPPAP) show a composition bias toward pro residues. The segment covering 107–118 (LLNPRNHSTPQS) has biased composition (polar residues). Serine 128 is subject to Phosphoserine. 322-329 (GACDIGKS) serves as a coordination point for ATP. Residues 495–714 (FTYEEKESSP…PRHKLRQRRK (220 aa)) are interaction with LAS1L. A Glycyl lysine isopeptide (Lys-Gly) (interchain with G-Cter in SUMO2) cross-link involves residue lysine 500. Serine 502 is subject to Phosphoserine.

The protein belongs to the Clp1 family. NOL9/GRC3 subfamily. Interacts with PELP1, WDR18 and SENP3. Interacts with LAS1L to form an ITS2 pre-rRNA endonuclease-kinase complex.

It is found in the nucleus. The protein localises to the nucleolus. The enzyme catalyses a 5'-end dephospho-2'-deoxyribonucleoside-DNA + ATP = a 5'-end 5'-phospho-2'-deoxyribonucleoside-DNA + ADP + H(+). The catalysed reaction is a 5'-end dephospho-ribonucleoside-RNA + ATP = a 5'-end 5'-phospho-ribonucleoside-RNA + ADP + H(+). Functionally, polynucleotide kinase that can phosphorylate the 5'-hydroxyl groups of single-stranded and double-stranded RNA and DNA substrates. Involved in rRNA processing and its kinase activity is required for the processing of the 32S precursor into 5.8S and 28S rRNAs, more specifically for the generation of the major 5.8S(S) form. Required for the efficient pre-rRNA processing of internal transcribed spacer 2 (ITS2). Associates with LAS1L to form an ITS2 pre-rRNA endonuclease-kinase complex and is responsible for the transport of this complex into the nucleolus. The sequence is that of Polynucleotide 5'-hydroxyl-kinase NOL9 from Mus musculus (Mouse).